We begin with the raw amino-acid sequence, 245 residues long: MIIPALDLIDGTVVRLHQGDYGQQRDYGRDPLPRLQDYEAQGAQLLHLVDLTGAKDPAKRQIALIQKLVAGVNVPVQVGGGVRSEDDVAALLDAGVARVVVGSTAVKAPQDVQRWFQRFGADALVLALDVRIDDAGNKQVAVSGWQENSGVTLETLVESYLPAGLKHVLCTDISRDGTLSGSNVALYEEVCARYPQVAFQSSGGIGELSDIRALRGSGVGGVIVGRALLEGKFNVTEAIQCWQNG.

Asp7 functions as the Proton acceptor in the catalytic mechanism. Asp129 (proton donor) is an active-site residue.

The protein belongs to the HisA/HisF family.

The protein resides in the cytoplasm. The catalysed reaction is 1-(5-phospho-beta-D-ribosyl)-5-[(5-phospho-beta-D-ribosylamino)methylideneamino]imidazole-4-carboxamide = 5-[(5-phospho-1-deoxy-D-ribulos-1-ylimino)methylamino]-1-(5-phospho-beta-D-ribosyl)imidazole-4-carboxamide. Its pathway is amino-acid biosynthesis; L-histidine biosynthesis; L-histidine from 5-phospho-alpha-D-ribose 1-diphosphate: step 4/9. In Cronobacter sakazakii (strain ATCC BAA-894) (Enterobacter sakazakii), this protein is 1-(5-phosphoribosyl)-5-[(5-phosphoribosylamino)methylideneamino] imidazole-4-carboxamide isomerase.